Reading from the N-terminus, the 158-residue chain is Small ribosomal subunit protein uS15 (158 aa).

The span at 1–18 (MARMHARKRGKSGSKRPP) shows a compositional bias: basic residues. The tract at residues 1 to 21 (MARMHARKRGKSGSKRPPRTA) is disordered.

The protein belongs to the universal ribosomal protein uS15 family. As to quaternary structure, part of the 30S ribosomal subunit.

The polypeptide is Small ribosomal subunit protein uS15 (Pyrococcus abyssi (strain GE5 / Orsay)).